We begin with the raw amino-acid sequence, 572 residues long: Proline--tRNA ligase (572 aa).

Belongs to the class-II aminoacyl-tRNA synthetase family. ProS type 1 subfamily. As to quaternary structure, homodimer.

Its subcellular location is the cytoplasm. The enzyme catalyses tRNA(Pro) + L-proline + ATP = L-prolyl-tRNA(Pro) + AMP + diphosphate. In terms of biological role, catalyzes the attachment of proline to tRNA(Pro) in a two-step reaction: proline is first activated by ATP to form Pro-AMP and then transferred to the acceptor end of tRNA(Pro). As ProRS can inadvertently accommodate and process non-cognate amino acids such as alanine and cysteine, to avoid such errors it has two additional distinct editing activities against alanine. One activity is designated as 'pretransfer' editing and involves the tRNA(Pro)-independent hydrolysis of activated Ala-AMP. The other activity is designated 'posttransfer' editing and involves deacylation of mischarged Ala-tRNA(Pro). The misacylated Cys-tRNA(Pro) is not edited by ProRS. This is Proline--tRNA ligase from Psychrobacter cryohalolentis (strain ATCC BAA-1226 / DSM 17306 / VKM B-2378 / K5).